Reading from the N-terminus, the 525-residue chain is Alpha-ketoglutaric semialdehyde dehydrogenase 2 (525 aa).

Residues lysine 185, glutamate 188, and 242–247 (GSRQGG) each bind NAD(+). The Proton acceptor role is filled by glutamate 266. Cysteine 303 acts as the Nucleophile in catalysis. Residue glutamate 394 participates in NAD(+) binding.

The protein belongs to the aldehyde dehydrogenase family. In terms of assembly, homodimer.

It carries out the reaction 2,5-dioxopentanoate + NADP(+) + H2O = 2-oxoglutarate + NADPH + 2 H(+). It catalyses the reaction 2,5-dioxopentanoate + NAD(+) + H2O = 2-oxoglutarate + NADH + 2 H(+). The protein operates within carbohydrate acid metabolism; D-glucarate degradation. Its pathway is carbohydrate acid metabolism; galactarate degradation. Catalyzes the NAD(P)(+)-dependent oxidation of alpha-ketoglutaric semialdehyde (alphaKGSA) to alpha-ketoglutarate. Involved in D-glucarate/D-galactarate metabolism. Prefers NAD(+) to NADP(+) as a cosubstrate. The sequence is that of Alpha-ketoglutaric semialdehyde dehydrogenase 2 from Azospirillum brasilense.